Consider the following 489-residue polypeptide: Lysine--tRNA ligase (489 aa).

The Mg(2+) site is built by Glu399 and Glu406.

Belongs to the class-II aminoacyl-tRNA synthetase family. In terms of assembly, homodimer. Requires Mg(2+) as cofactor.

It is found in the cytoplasm. It catalyses the reaction tRNA(Lys) + L-lysine + ATP = L-lysyl-tRNA(Lys) + AMP + diphosphate. This is Lysine--tRNA ligase from Synechococcus sp. (strain CC9311).